The primary structure comprises 752 residues: RNA-directed RNA polymerase catalytic subunit (752 aa).

2 short sequence motifs (nuclear localization signal) span residues 187-195 (IKKKLPAKN) and 203-216 (RIPMKVKDRITRVE). The segment at 249–256 (RGFVLVVE) is promoter-binding site. A RdRp catalytic domain is found at 286-482 (VAKMLSNCPP…GINMSKKKSY (197 aa)).

This sequence belongs to the influenza viruses polymerase PB1 family. In terms of assembly, influenza RNA polymerase is composed of three subunits: PB1, PB2 and PA. Interacts (via N-terminus) with PA (via C-terminus). Interacts (via C-terminus) with PB2 (via N-terminus); this interaction is essential for transcription initiation. Phosphorylated by host PRKCA.

The protein resides in the host nucleus. It is found in the host cytoplasm. The enzyme catalyses RNA(n) + a ribonucleoside 5'-triphosphate = RNA(n+1) + diphosphate. RNA-dependent RNA polymerase which is responsible for replication and transcription of virus RNA segments. The transcription of viral mRNAs occurs by a unique mechanism called cap-snatching. 5' methylated caps of cellular mRNAs are cleaved after 10-13 nucleotides by PA. In turn, these short capped RNAs are used as primers by PB1 for transcription of viral mRNAs. During virus replication, PB1 initiates RNA synthesis and copy vRNA into complementary RNA (cRNA) which in turn serves as a template for the production of more vRNAs. The protein is RNA-directed RNA polymerase catalytic subunit of Homo sapiens (Human).